The primary structure comprises 432 residues: Amino-acid acetyltransferase (432 aa).

The 140-residue stretch at 286-425 (ERVREAAIED…ASLYNYQRNS (140 aa)) folds into the N-acetyltransferase domain.

It belongs to the acetyltransferase family. ArgA subfamily.

The protein resides in the cytoplasm. The enzyme catalyses L-glutamate + acetyl-CoA = N-acetyl-L-glutamate + CoA + H(+). Its pathway is amino-acid biosynthesis; L-arginine biosynthesis; N(2)-acetyl-L-ornithine from L-glutamate: step 1/4. This chain is Amino-acid acetyltransferase, found in Pseudomonas fluorescens (strain ATCC BAA-477 / NRRL B-23932 / Pf-5).